The following is a 132-amino-acid chain: MAELKKMRHNHYDVPVMDEPVIASQIKKTNQKKESFQLPQKKLNKISVFEKILCILLLCSIVGIVVITIQIRTTISETMNNITEAQVKNERKKEEMLKLEQEKSELSKADRIKSIGKKQGLSEIDGNLRKVK.

The Cytoplasmic segment spans residues 1 to 50 (MAELKKMRHNHYDVPVMDEPVIASQIKKTNQKKESFQLPQKKLNKISVFE). A helical membrane pass occupies residues 51–71 (KILCILLLCSIVGIVVITIQI). Over 72–132 (RTTISETMNN…EIDGNLRKVK (61 aa)) the chain is Extracellular.

It belongs to the FtsL family.

Its subcellular location is the cell membrane. Functionally, essential cell division protein. The protein is Cell division protein FtsL of Melissococcus plutonius (strain ATCC 35311 / DSM 29964 / CIP 104052 / LMG 20360 / NCIMB 702443).